A 361-amino-acid polypeptide reads, in one-letter code: Uroporphyrinogen decarboxylase (361 aa).

Substrate is bound by residues 27–31 (RQAGR), D77, Y154, T209, and H327.

This sequence belongs to the uroporphyrinogen decarboxylase family. As to quaternary structure, homodimer.

The protein localises to the cytoplasm. It catalyses the reaction uroporphyrinogen III + 4 H(+) = coproporphyrinogen III + 4 CO2. It participates in porphyrin-containing compound metabolism; protoporphyrin-IX biosynthesis; coproporphyrinogen-III from 5-aminolevulinate: step 4/4. Its function is as follows. Catalyzes the decarboxylation of four acetate groups of uroporphyrinogen-III to yield coproporphyrinogen-III. In Coxiella burnetii (strain RSA 331 / Henzerling II), this protein is Uroporphyrinogen decarboxylase.